The following is a 400-amino-acid chain: Delta(12) fatty acid desaturase (400 aa).

Residues 91 to 111 (LAWPAYWIMQGIVCTGIWVLA) traverse the membrane as a helical segment. Residues 112-116 (HECGH) carry the Histidine box-1 motif. The Histidine box-2 motif lies at 148–152 (HSKHH). 3 helical membrane passes run 199–219 (IVTLFWMVIQFLFGWPAYLIM), 245–265 (FFDIIISDLGVLAALGALIYA), and 277–297 (YYIIPYLFVNFWLVLITFLQH). The Histidine box-3 signature appears at 339–343 (HVAHH).

The protein belongs to the fatty acid desaturase type 1 family.

It localises to the membrane. The catalysed reaction is (9Z)-octadecenoyl-CoA + 2 Fe(II)-[cytochrome b5] + O2 + 2 H(+) = (9Z,12Z)-octadecadienoyl-CoA + 2 Fe(III)-[cytochrome b5] + 2 H2O. It carries out the reaction (9Z)-hexadecenoyl-CoA + 2 Fe(II)-[cytochrome b5] + O2 + 2 H(+) = (9Z,12Z)-hexadecadienoyl-CoA + 2 Fe(III)-[cytochrome b5] + 2 H2O. It participates in lipid metabolism; polyunsaturated fatty acid biosynthesis. Functionally, catalyzes the desaturation of oleic acid (Delta(9)-18:1) to linoleic acid (Delta(9), Delta(12)-18:2). The protein is Delta(12) fatty acid desaturase of Mortierella isabellina (Filamentous fungus).